Consider the following 304-residue polypeptide: Thyroxine 5-deiodinase (304 aa).

Residues 1-22 (MPRQAASRLVVGEGEGPPGASG) form a disordered region. Residues 1 to 44 (MPRQAASRLVVGEGEGPPGASGPAATMLRSLLLHSLRLCAQTAS) are Cytoplasmic-facing. A helical; Signal-anchor for type II membrane protein transmembrane segment spans residues 45–67 (CLVLFPRFLGTAFMLWLLDFLCI). Residues 68–304 (RKHFLRRRHP…QLHGTRPHRF (237 aa)) lie on the Extracellular side of the membrane. The active site involves Sec-170. Residue Sec-170 is a non-standard amino acid, selenocysteine.

It belongs to the iodothyronine deiodinase family. Monomer. Homodimer. May undergo minor heretodimerization with DIO1 and DIO2.

It localises to the cell membrane. Its subcellular location is the endosome membrane. The enzyme catalyses 3,3',5'-triiodo-L-thyronine + iodide + A + H(+) = L-thyroxine + AH2. The catalysed reaction is 3,3'-diiodo-L-thyronine + iodide + A + H(+) = 3,3',5-triiodo-L-thyronine + AH2. It catalyses the reaction 3-iodo-L-thyronine + iodide + A + H(+) = 3,5-diiodo-L-thyronine + AH2. It carries out the reaction L-thyronine + iodide + A + H(+) = 3-iodo-L-thyronine + AH2. The enzyme catalyses 3',5'-diiodo-L-thyronine + iodide + A + H(+) = 3,3',5'-triiodo-L-thyronine + AH2. The catalysed reaction is 3'-iodo-L-thyronine + iodide + A + H(+) = 3,3'-diiodo-L-thyronine + AH2. It catalyses the reaction 3,3',5'-triiodothyronamine + iodide + A + H(+) = 3,3',5,5'-tetraiodothyronamine + AH2. It carries out the reaction 3',5'-diiodothyronamine + iodide + A + H(+) = 3,3',5'-triiodothyronamine + AH2. The enzyme catalyses 3,3'-diiodothyronamine + iodide + A + H(+) = 3,3',5-triiodothyronamine + AH2. The catalysed reaction is 3-iodothyronamine + iodide + A + H(+) = 3,5-diiodothyronamine + AH2. It catalyses the reaction 3'-iodothyronamine + iodide + A + H(+) = 3,3'-diiodothyronamine + AH2. It carries out the reaction thyronamine + iodide + A + H(+) = 3-iodothyronamine + AH2. Its function is as follows. Plays a crucial role in the metabolism of thyroid hormones (TH) and has specific roles in TH activation and inactivation by deiodination. Catalyzes the deiodination of L-thyroxine (T4) to 3,3',5'-triiodothyronine (rT3), 3,5,3'-triiodothyronine (T3) to 3,3'-diiodothyronine (3,3'-T2), 3,5-diiodothyronine (3,5-T2) to 3-monoiodothyronine (3-T1), rT3 to 3',5'-diiodothyronine (3',5'-T2) and 3,3'-T2 to 3'-monoiodothyronine (3'-T1) via inner-ring deiodination (IRD). Catalyzes the deiodination of 3-T1 to L-thyronine (T0) via outer-ring deiodination (ORD). Catalyzes the tyrosyl ring deiodinations of 3,3',5,5'-tetraiodothyronamine, 3,3',5'-triiodothyronamine, 3,5,3'-triiodothyronamine, 3,5-diiodothyronamine, 3,3'-diiodothyronamine and 3-iodothyronamine. In Mus musculus (Mouse), this protein is Thyroxine 5-deiodinase (Dio3).